Reading from the N-terminus, the 64-residue chain is MAQEQTKRTGGGDEDEGSAGPEAAGQERREKLAEDTDDLLDEIDDVLEENAEDFVRAYVQKGGQ.

Basic and acidic residues-rich tracts occupy residues 1-11 (MAQEQTKRTGG) and 25-34 (GQERREKLAE). The interval 1 to 38 (MAQEQTKRTGGGDEDEGSAGPEAAGQERREKLAEDTDD) is disordered. The tract at residues 21–58 (PEAAGQERREKLAEDTDDLLDEIDDVLEENAEDFVRAY) is ARC ATPase binding. Positions 24–52 (AGQERREKLAEDTDDLLDEIDDVLEENAE) form a coiled coil. The residue at position 64 (glutamine 64) is a Deamidated glutamine. An Isoglutamyl lysine isopeptide (Gln-Lys) (interchain with K-? in acceptor proteins) cross-link involves residue glutamine 64.

Belongs to the prokaryotic ubiquitin-like protein family. In terms of assembly, strongly interacts with the proteasome-associated ATPase ARC through a hydrophobic interface; the interacting region of Pup lies in its C-terminal half. There is one Pup binding site per ARC hexamer ring. In terms of processing, is modified by deamidation of its C-terminal glutamine to glutamate by the deamidase Dop, a prerequisite to the subsequent pupylation process.

It participates in protein degradation; proteasomal Pup-dependent pathway. In terms of biological role, protein modifier that is covalently attached to lysine residues of substrate proteins, thereby targeting them for proteasomal degradation. The tagging system is termed pupylation. The sequence is that of Prokaryotic ubiquitin-like protein Pup from Nocardia farcinica (strain IFM 10152).